The primary structure comprises 490 residues: Glutamate--tRNA ligase (490 aa).

The short motif at 9–19 (PSPTGLQHIGG) is the 'HIGH' region element. The short motif at 251–255 (KLSKR) is the 'KMSKS' region element. Residue K254 participates in ATP binding.

It belongs to the class-I aminoacyl-tRNA synthetase family. Glutamate--tRNA ligase type 1 subfamily. In terms of assembly, monomer.

It localises to the cytoplasm. The enzyme catalyses tRNA(Glu) + L-glutamate + ATP = L-glutamyl-tRNA(Glu) + AMP + diphosphate. In terms of biological role, catalyzes the attachment of glutamate to tRNA(Glu) in a two-step reaction: glutamate is first activated by ATP to form Glu-AMP and then transferred to the acceptor end of tRNA(Glu). The protein is Glutamate--tRNA ligase of Borreliella afzelii (strain PKo) (Borrelia afzelii).